A 61-amino-acid polypeptide reads, in one-letter code: MAKKSLKVKQTRIPKFAVRAYTRCQRCGRARAVLSHFGVCRLCFRELAYAGAIPGVKKASW.

The Zn(2+) site is built by C24, C27, C40, and C43.

It belongs to the universal ribosomal protein uS14 family. Zinc-binding uS14 subfamily. In terms of assembly, part of the 30S ribosomal subunit. Contacts proteins S3 and S10. The cofactor is Zn(2+).

In terms of biological role, binds 16S rRNA, required for the assembly of 30S particles and may also be responsible for determining the conformation of the 16S rRNA at the A site. This Mycoplasma pneumoniae (strain ATCC 29342 / M129 / Subtype 1) (Mycoplasmoides pneumoniae) protein is Small ribosomal subunit protein uS14.